We begin with the raw amino-acid sequence, 206 residues long: Ribosomal RNA small subunit methyltransferase G (206 aa).

Residues Gly-73, Leu-78, 124–125 (VE), and Arg-139 contribute to the S-adenosyl-L-methionine site.

It belongs to the methyltransferase superfamily. RNA methyltransferase RsmG family.

The protein resides in the cytoplasm. The catalysed reaction is guanosine(527) in 16S rRNA + S-adenosyl-L-methionine = N(7)-methylguanosine(527) in 16S rRNA + S-adenosyl-L-homocysteine. Its function is as follows. Specifically methylates the N7 position of guanine in position 527 of 16S rRNA. The protein is Ribosomal RNA small subunit methyltransferase G of Serratia proteamaculans (strain 568).